The primary structure comprises 293 residues: Phosphatidylserine decarboxylase proenzyme (293 aa).

Residues aspartate 90, histidine 147, and serine 254 each act as charge relay system; for autoendoproteolytic cleavage activity in the active site. The Schiff-base intermediate with substrate; via pyruvic acid; for decarboxylase activity role is filled by serine 254. At serine 254 the chain carries Pyruvic acid (Ser); by autocatalysis.

It belongs to the phosphatidylserine decarboxylase family. PSD-B subfamily. Prokaryotic type I sub-subfamily. In terms of assembly, heterodimer of a large membrane-associated beta subunit and a small pyruvoyl-containing alpha subunit. Pyruvate is required as a cofactor. In terms of processing, is synthesized initially as an inactive proenzyme. Formation of the active enzyme involves a self-maturation process in which the active site pyruvoyl group is generated from an internal serine residue via an autocatalytic post-translational modification. Two non-identical subunits are generated from the proenzyme in this reaction, and the pyruvate is formed at the N-terminus of the alpha chain, which is derived from the carboxyl end of the proenzyme. The autoendoproteolytic cleavage occurs by a canonical serine protease mechanism, in which the side chain hydroxyl group of the serine supplies its oxygen atom to form the C-terminus of the beta chain, while the remainder of the serine residue undergoes an oxidative deamination to produce ammonia and the pyruvoyl prosthetic group on the alpha chain. During this reaction, the Ser that is part of the protease active site of the proenzyme becomes the pyruvoyl prosthetic group, which constitutes an essential element of the active site of the mature decarboxylase.

The protein localises to the cell membrane. The enzyme catalyses a 1,2-diacyl-sn-glycero-3-phospho-L-serine + H(+) = a 1,2-diacyl-sn-glycero-3-phosphoethanolamine + CO2. It functions in the pathway phospholipid metabolism; phosphatidylethanolamine biosynthesis; phosphatidylethanolamine from CDP-diacylglycerol: step 2/2. In terms of biological role, catalyzes the formation of phosphatidylethanolamine (PtdEtn) from phosphatidylserine (PtdSer). This Yersinia enterocolitica serotype O:8 / biotype 1B (strain NCTC 13174 / 8081) protein is Phosphatidylserine decarboxylase proenzyme.